The primary structure comprises 165 residues: Growth arrest and DNA damage-inducible protein GADD45 alpha (165 aa).

Threonine 2 bears the Phosphothreonine mark.

Belongs to the GADD45 family. As to quaternary structure, interacts with AURKA, PCNA, GADD45GIP1 and MAPK14.

It localises to the nucleus. Might affect PCNA interaction with some CDK (cell division protein kinase) complexes; stimulates DNA excision repair in vitro and inhibits entry of cells into S phase. In T-cells, functions as a regulator of p38 MAPKs by inhibiting p88 phosphorylation and activity. The chain is Growth arrest and DNA damage-inducible protein GADD45 alpha (GADD45A) from Bos taurus (Bovine).